The sequence spans 510 residues: NAD(P)H-quinone oxidoreductase subunit 2 B, chloroplastic (510 aa).

13 helical membrane-spanning segments follow: residues 24–44 (LLLFDGSFIFPECILIFGLIL), 57–77 (ISWFYFISSTSLVMSIVVLLF), 99–119 (IFQFLILLSSTLCIPLSVEYI), 124–144 (MAITEFLLFVLTATLGGMFLC), 149–169 (LITIFVAPECFSLCSYLLSGY), 183–203 (YLLMGGASSSILVHGFSWLYG), 227–247 (PGISIALIFITVGIGFKLSLA), 295–315 (WHLLLEILAILSMILGNLIAI), 323–343 (MLAYSSIGQIGYVIIGIIVGD), 354–374 (YMLFYISMNLGTFACIVSFGL), 395–415 (ALSLALCLLSLGGLPPLAGFF), 418–438 (LYLFWCGWQAGLYFLVSIGLL), and 482–502 (LSMIVCVIASTISGISMNPII).

It belongs to the complex I subunit 2 family. As to quaternary structure, NDH is composed of at least 16 different subunits, 5 of which are encoded in the nucleus.

It localises to the plastid. The protein localises to the chloroplast thylakoid membrane. It catalyses the reaction a plastoquinone + NADH + (n+1) H(+)(in) = a plastoquinol + NAD(+) + n H(+)(out). It carries out the reaction a plastoquinone + NADPH + (n+1) H(+)(in) = a plastoquinol + NADP(+) + n H(+)(out). NDH shuttles electrons from NAD(P)H:plastoquinone, via FMN and iron-sulfur (Fe-S) centers, to quinones in the photosynthetic chain and possibly in a chloroplast respiratory chain. The immediate electron acceptor for the enzyme in this species is believed to be plastoquinone. Couples the redox reaction to proton translocation, and thus conserves the redox energy in a proton gradient. In Lotus japonicus (Lotus corniculatus var. japonicus), this protein is NAD(P)H-quinone oxidoreductase subunit 2 B, chloroplastic.